The chain runs to 78 residues: Beta-defensin 105A (78 aa).

The signal sequence occupies residues 1-27 (MALIRKTFYFVFAVFFILVQQPSGCQA). Disulfide bonds link Cys43–Cys74, Cys53–Cys67, and Cys57–Cys73.

Belongs to the beta-defensin family.

It localises to the secreted. In terms of biological role, has antimicrobial activity. The chain is Beta-defensin 105A (DEFB105A) from Macaca fascicularis (Crab-eating macaque).